The primary structure comprises 147 residues: DNA-directed RNA polymerase I subunit rpa14 (147 aa).

Positions 71-147 (VQGPPTEELI…TQGVGEKEQS (77 aa)) are disordered. Positions 74–84 (PPTEELIIPPE) are enriched in low complexity. A compositionally biased stretch (basic and acidic residues) spans 87–111 (LETKEEESLKHAREENDDLHLDKET). Basic residues predominate over residues 112–124 (KKRLKKEKKKAAR). Basic and acidic residues predominate over residues 125–135 (REKEEARKAKA).

As to quaternary structure, component of the RNA polymerase I (Pol I) complex consisting of 14 subunits. Part of a Pol I subcomplex consisting of the subunits A14 and A43. Interacts with rpa43. In terms of processing, phosphorylated.

It localises to the nucleus. The protein localises to the nucleolus. DNA-dependent RNA polymerase catalyzes the transcription of DNA into RNA using the four ribonucleoside triphosphates as substrates. Component of RNA polymerase I which synthesizes ribosomal RNA precursors. A14 seems to play a role in the stability of Pol I subunit A43 and association of rrn3 to Pol I. The chain is DNA-directed RNA polymerase I subunit rpa14 (ker1) from Schizosaccharomyces pombe (strain 972 / ATCC 24843) (Fission yeast).